The primary structure comprises 498 residues: Glutathione synthetase large chain (498 aa).

Residue R128 coordinates substrate. Residue E146 coordinates ATP. E146 and N148 together coordinate Mg(2+). Substrate is bound by residues 150–153, 233–235, Q239, and 291–294; these read ISVS, ERN, and RVGY. An ATP-binding site is contributed by K330. The residue at position 356 (S356) is a Phosphoserine. ATP contacts are provided by residues 387–396, Y398, 420–423, and E446; these read KPQREGGGNN and MRYI. E391 is a binding site for Mg(2+). R473 is a substrate binding site. K475 and E481 together coordinate ATP. 484–485 serves as a coordination point for substrate; the sequence is VA.

The protein belongs to the eukaryotic GSH synthase family. As to quaternary structure, heterodimer composed of a large and a small chain. The cofactor is Mg(2+).

It carries out the reaction gamma-L-glutamyl-L-cysteine + glycine + ATP = glutathione + ADP + phosphate + H(+). It functions in the pathway sulfur metabolism; glutathione biosynthesis; glutathione from L-cysteine and L-glutamate: step 2/2. This chain is Glutathione synthetase large chain (gsa1), found in Schizosaccharomyces pombe (strain 972 / ATCC 24843) (Fission yeast).